Consider the following 394-residue polypeptide: Salivary plasminogen activator gamma (394 aa).

A signal peptide spans 1–36 (MVNTMKTKLLCVLLLCGAVFSLPRQETYRQLARGSR). The Kringle domain maps to 45–126 (CYKDQGVTYR…TSESCSVPVC (82 aa)). 9 disulfide bridges follow: Cys45/Cys126, Cys66/Cys108, Cys97/Cys121, Cys131/Cys262, Cys174/Cys190, Cys182/Cys251, Cys276/Cys351, Cys308/Cys324, and Cys341/Cys369. The region spanning 143–393 (STGGLFTDIT…YLGWIRDNMR (251 aa)) is the Peptidase S1 domain. Catalysis depends on charge relay system residues His189 and Asp238. Asn315 is a glycosylation site (N-linked (GlcNAc...) asparagine). The Charge relay system role is filled by Ser345.

It belongs to the peptidase S1 family. Monomer.

Its subcellular location is the secreted. The enzyme catalyses Specific cleavage of Arg-|-Val bond in plasminogen to form plasmin.. Functionally, probably essential to support the feeding habits of this exclusively haematophagous animal. Probable potent thrombolytic agent. The chain is Salivary plasminogen activator gamma from Desmodus rotundus (Vampire bat).